Consider the following 341-residue polypeptide: Protein DOWNY MILDEW RESISTANCE 6 (341 aa).

The 101-residue stretch at 188–288 (QGQHMAVNYY…RLSVASFLCP (101 aa)) folds into the Fe2OG dioxygenase domain. Positions 212, 214, and 269 each coordinate Fe cation. Arginine 279 is a 2-oxoglutarate binding site.

This sequence belongs to the iron/ascorbate-dependent oxidoreductase family. It depends on Fe(2+) as a cofactor.

It carries out the reaction salicylate + NADH + O2 + H(+) = 2,3-dihydroxybenzoate + NAD(+) + H2O. In terms of biological role, converts salicylic acid (SA) to 2,3-dihydroxybenzoic acid (2,3-DHBA). Suppressor of immunity. Regulates negatively defense associated genes expression (e.g. PR-1, PR-2, and PR-5). Negative regulator of defense against Hyaloperonospora arabidopsidis. Its function is as follows. (Microbial infection) Required for susceptibility to the downy mildew pathogen Hyaloperonospora arabidopsidis. (Microbial infection) Required for susceptibility to Pseudomonas syringae pv. tomato DC3000. Functionally, (Microbial infection) Required for susceptibility to the oomycete Phytophthora capsici. In Arabidopsis thaliana (Mouse-ear cress), this protein is Protein DOWNY MILDEW RESISTANCE 6.